Here is a 456-residue protein sequence, read N- to C-terminus: Bifunctional protein GlmU (456 aa).

The pyrophosphorylase stretch occupies residues 1 to 231 (MERTCLAIIL…EEELTGCNTR (231 aa)). Residues 10–13 (LAAG), lysine 24, glutamine 77, and 82–83 (GT) each bind UDP-N-acetyl-alpha-D-glucosamine. Aspartate 107 lines the Mg(2+) pocket. Positions 143, 157, 172, and 229 each coordinate UDP-N-acetyl-alpha-D-glucosamine. Asparagine 229 serves as a coordination point for Mg(2+). A linker region spans residues 232 to 252 (AELAYIERLWQQRRRQELMLA). Residues 253–456 (GVSMVAPETV…AARKKVKAAE (204 aa)) form an N-acetyltransferase region. UDP-N-acetyl-alpha-D-glucosamine contacts are provided by arginine 318 and lysine 336. Histidine 348 (proton acceptor) is an active-site residue. UDP-N-acetyl-alpha-D-glucosamine-binding residues include tyrosine 351 and asparagine 362. Residues alanine 365, 371-372 (NY), serine 390, serine 408, and arginine 425 each bind acetyl-CoA.

The protein in the N-terminal section; belongs to the N-acetylglucosamine-1-phosphate uridyltransferase family. This sequence in the C-terminal section; belongs to the transferase hexapeptide repeat family. As to quaternary structure, homotrimer. It depends on Mg(2+) as a cofactor.

Its subcellular location is the cytoplasm. The enzyme catalyses alpha-D-glucosamine 1-phosphate + acetyl-CoA = N-acetyl-alpha-D-glucosamine 1-phosphate + CoA + H(+). It catalyses the reaction N-acetyl-alpha-D-glucosamine 1-phosphate + UTP + H(+) = UDP-N-acetyl-alpha-D-glucosamine + diphosphate. The protein operates within nucleotide-sugar biosynthesis; UDP-N-acetyl-alpha-D-glucosamine biosynthesis; N-acetyl-alpha-D-glucosamine 1-phosphate from alpha-D-glucosamine 6-phosphate (route II): step 2/2. It functions in the pathway nucleotide-sugar biosynthesis; UDP-N-acetyl-alpha-D-glucosamine biosynthesis; UDP-N-acetyl-alpha-D-glucosamine from N-acetyl-alpha-D-glucosamine 1-phosphate: step 1/1. It participates in bacterial outer membrane biogenesis; LPS lipid A biosynthesis. Functionally, catalyzes the last two sequential reactions in the de novo biosynthetic pathway for UDP-N-acetylglucosamine (UDP-GlcNAc). The C-terminal domain catalyzes the transfer of acetyl group from acetyl coenzyme A to glucosamine-1-phosphate (GlcN-1-P) to produce N-acetylglucosamine-1-phosphate (GlcNAc-1-P), which is converted into UDP-GlcNAc by the transfer of uridine 5-monophosphate (from uridine 5-triphosphate), a reaction catalyzed by the N-terminal domain. In Sinorhizobium fredii (strain NBRC 101917 / NGR234), this protein is Bifunctional protein GlmU.